A 216-amino-acid polypeptide reads, in one-letter code: Triosephosphate isomerase (216 aa).

7-9 is a binding site for substrate; that stretch reads NLK. His-89 acts as the Electrophile in catalysis. Glu-137 serves as the catalytic Proton acceptor. Substrate-binding positions include Ile-142, Gly-175, and 196–197; that span reads AS.

This sequence belongs to the triosephosphate isomerase family. Homotetramer; dimer of dimers.

The protein resides in the cytoplasm. It catalyses the reaction D-glyceraldehyde 3-phosphate = dihydroxyacetone phosphate. It participates in carbohydrate biosynthesis; gluconeogenesis. The protein operates within carbohydrate degradation; glycolysis; D-glyceraldehyde 3-phosphate from glycerone phosphate: step 1/1. In terms of biological role, involved in the gluconeogenesis. Catalyzes stereospecifically the conversion of dihydroxyacetone phosphate (DHAP) to D-glyceraldehyde-3-phosphate (G3P). In Thermoplasma acidophilum (strain ATCC 25905 / DSM 1728 / JCM 9062 / NBRC 15155 / AMRC-C165), this protein is Triosephosphate isomerase.